A 391-amino-acid polypeptide reads, in one-letter code: S-adenosylmethionine synthase (391 aa).

H19 contributes to the ATP binding site. D21 contacts Mg(2+). E47 lines the K(+) pocket. Residues E60 and Q103 each contribute to the L-methionine site. Residues 103 to 113 (QSADIAQGVDR) form a flexible loop region. ATP is bound by residues 168 to 170 (DGK), 236 to 237 (RF), D245, 251 to 252 (RK), A268, and K272. D245 contacts L-methionine. Position 276 (K276) interacts with L-methionine.

The protein belongs to the AdoMet synthase family. Homotetramer; dimer of dimers. Requires Mg(2+) as cofactor. It depends on K(+) as a cofactor.

The protein resides in the cytoplasm. The enzyme catalyses L-methionine + ATP + H2O = S-adenosyl-L-methionine + phosphate + diphosphate. It functions in the pathway amino-acid biosynthesis; S-adenosyl-L-methionine biosynthesis; S-adenosyl-L-methionine from L-methionine: step 1/1. In terms of biological role, catalyzes the formation of S-adenosylmethionine (AdoMet) from methionine and ATP. The overall synthetic reaction is composed of two sequential steps, AdoMet formation and the subsequent tripolyphosphate hydrolysis which occurs prior to release of AdoMet from the enzyme. The protein is S-adenosylmethionine synthase of Nitratidesulfovibrio vulgaris (strain ATCC 29579 / DSM 644 / CCUG 34227 / NCIMB 8303 / VKM B-1760 / Hildenborough) (Desulfovibrio vulgaris).